A 329-amino-acid chain; its full sequence is Transmembrane protein I329L (329 aa).

Residues 1–31 form the signal peptide; that stretch reads MLRVFIFFVFLGSGLAGKVKSPITCKYFISK. N-linked (GlcNAc...) asparagine; by host glycans are attached at residues asparagine 32, asparagine 39, asparagine 44, asparagine 58, asparagine 76, asparagine 82, asparagine 101, asparagine 185, and asparagine 219. Residues 32–239 are Extracellular-facing; that stretch reads NNTWYKYNVT…NTERYKNCYP (208 aa). The chain crosses the membrane as a helical span at residues 240-260; it reads FVLVSIICSCISSLFLLICLL. The Cytoplasmic segment spans residues 261–329; it reads RTICKKYSCT…EKKVSCSRRK (69 aa).

This sequence belongs to the asfivirus I329L family. In terms of processing, highly glycosylated.

It localises to the host endoplasmic reticulum membrane. It is found in the host Golgi apparatus membrane. Functionally, viral TLR3 homolog that probably prevents TLR3 dimerization and subsequent induction of IFN. Inhibits dsRNA-stimulated activation of NF-kB and IRF3. The polypeptide is Transmembrane protein I329L (Ornithodoros (relapsing fever ticks)).